The chain runs to 457 residues: Cysteine--tRNA ligase (457 aa).

Residue Cys30 coordinates Zn(2+). The short motif at 32-42 (PTVYAPAHIGN) is the 'HIGH' region element. Zn(2+) is bound by residues Cys221, His246, and Glu250. Residues 278–282 (KMSKS) carry the 'KMSKS' region motif. Lys281 is an ATP binding site.

It belongs to the class-I aminoacyl-tRNA synthetase family. As to quaternary structure, monomer. Zn(2+) serves as cofactor.

The protein resides in the cytoplasm. It catalyses the reaction tRNA(Cys) + L-cysteine + ATP = L-cysteinyl-tRNA(Cys) + AMP + diphosphate. The chain is Cysteine--tRNA ligase from Opitutus terrae (strain DSM 11246 / JCM 15787 / PB90-1).